Reading from the N-terminus, the 203-residue chain is MNSEVLLIEGASLMNIKLESEQISKLMNYLKLIIKWNKSYNLSAIRTMEKGVYKHLLDSLSVIAYIKDKSLLDVGSGAGLPGIVISIMRPELLVTVLDTVGKKCRFMQFAKTQLQLKNLNVIKNRVENYQIEFCFEQIISRAFSKVEKILKLTQHLLCNNGEYLLMKGAGFQQETLPYGVDIQSLCVPEILGKRYLLIFRREK.

S-adenosyl-L-methionine is bound by residues G75, L80, 126–127, and R141; that span reads VE.

This sequence belongs to the methyltransferase superfamily. RNA methyltransferase RsmG family.

The protein localises to the cytoplasm. It carries out the reaction guanosine(527) in 16S rRNA + S-adenosyl-L-methionine = N(7)-methylguanosine(527) in 16S rRNA + S-adenosyl-L-homocysteine. Functionally, specifically methylates the N7 position of guanine in position 527 of 16S rRNA. In Ruthia magnifica subsp. Calyptogena magnifica, this protein is Ribosomal RNA small subunit methyltransferase G.